The primary structure comprises 1336 residues: Putative botulinum-like toxin Wo (1336 aa).

Positions methionine 1–leucine 476 are has protease activity. Histidine 250 contacts Zn(2+). Glutamate 251 is a catalytic residue. Zn(2+) is bound by residues histidine 254 and glutamate 296.

The protein belongs to the peptidase M27 family. Requires Zn(2+) as cofactor.

It catalyses the reaction Limited hydrolysis of proteins of the neuroexocytosis apparatus, synaptobrevins, SNAP25 or syntaxin. No detected action on small molecule substrates.. Inhibited by EDTA and 1,10-phenanthroline. When overexpressed the N-terminus (residues 1-476) cleaves rat synaptobrevin-2/VAMP2 between '89-Trp-|-Trp-90' in vitro. This releases the cytoplasmic domain of VAMP2 from the synaptic vesicle membrane, which would prevent the assembly of the trans-SNARE complex on the membrane and thus prevent vesicle-target membrane fusion and neurotransmitter release. This Weissella oryzae (strain DSM 25784 / JCM 18191 / LMG 30913 / SG25) protein is Putative botulinum-like toxin Wo.